The following is a 165-amino-acid chain: Nucleotide-binding protein PMM0481 (165 aa).

The protein belongs to the YajQ family.

Its function is as follows. Nucleotide-binding protein. This is Nucleotide-binding protein PMM0481 from Prochlorococcus marinus subsp. pastoris (strain CCMP1986 / NIES-2087 / MED4).